A 140-amino-acid chain; its full sequence is uncharacterized protein (140 aa).

2 helical membrane-spanning segments follow: residues 26-43 (YLDLLLVLSIIDVLTGVI) and 64-86 (LLNFFAVILANVIDTVLNLNGVL).

The protein belongs to the bacteriophage holin family. Cp-1 holin subfamily.

It localises to the cell membrane. This is an uncharacterized protein from Bacillus subtilis (strain 168).